The primary structure comprises 1135 residues: Vinculin (1135 aa).

The N-terminal globular head stretch occupies residues 2–835 (PVFHTRTIES…GAVAKVREAF (834 aa)). Phosphotyrosine is present on Tyr100. The tract at residues 168-208 (MTKMAKMIDERQQELTHQEHRVMLVNSMNTVKELLPVLISA) is talin-interaction. Repeat copies occupy residues 259-369 (ASKD…KVEN), 370-479 (AARK…KTNR), and 480-589 (AVAN…RMQE). The tract at residues 259–589 (ASKDTEAMKR…LKDLKARMQE (331 aa)) is 3 X 112 AA tandem repeats. Tyr537 and Tyr822 each carry phosphotyrosine. A linker (Pro-rich) region spans residues 836-878 (QPQEPDFPPPPPDLEHLHLTDELAPPKPPLPEGEVPPPRPPPP). The tract at residues 837–888 (PQEPDFPPPPPDLEHLHLTDELAPPKPPLPEGEVPPPRPPPPEEKDEEFPEQ) is disordered. The span at 860 to 876 (PPKPPLPEGEVPPPRPP) shows a compositional bias: pro residues. The interval 879–1135 (EEKDEEFPEQ…RWVRKTPWYQ (257 aa)) is C-terminal tail. Facilitates phospholipid membrane insertion stretches follow at residues 1004–1047 (RLVR…KRIR) and 1121–1135 (AGFT…PWYQ). Tyr1134 is modified (phosphotyrosine; by SRC-type Tyr-kinases).

It belongs to the vinculin/alpha-catenin family. In terms of assembly, exhibits self-association properties. Interacts with APBB1IP, NRAP and TLN1. Interacts with CTNNB1 and this interaction is necessary for its localization to the cell-cell junctions and for its function in regulating cell surface expression of E-cadherin. In terms of processing, phosphorylated; on serines, threonines and tyrosines. Phosphorylation on Tyr-1134 in activated platelets affects head-tail interactions and cell spreading but has no effect on actin binding nor on localization to focal adhesion plaques. Acetylated; mainly by myristic acid but also by a small amount of palmitic acid. As to expression, isoform Metavinculin is muscle-specific.

It localises to the cell membrane. It is found in the cell junction. The protein localises to the adherens junction. Its subcellular location is the focal adhesion. The protein resides in the cytoplasm. It localises to the cytoskeleton. It is found in the sarcolemma. The protein localises to the cell projection. Its subcellular location is the podosome. Actin filament (F-actin)-binding protein involved in cell-matrix adhesion and cell-cell adhesion. Regulates cell-surface E-cadherin expression and potentiates mechanosensing by the E-cadherin complex. May also play important roles in cell morphology and locomotion. In Gallus gallus (Chicken), this protein is Vinculin (VCL).